Here is a 387-residue protein sequence, read N- to C-terminus: Beta-carotene 4-ketolase (387 aa).

The disordered stretch occupies residues 1-78; sequence MPHSIDMEDS…GNPTVDDASQ (78 aa). Composition is skewed to polar residues over residues 43–53 and 65–78; these read NWQTQYHSSEG and DATT…DASQ.

The enzyme catalyses echinenone + 2 AH2 + 2 O2 = canthaxanthin + 2 A + 3 H2O. The catalysed reaction is all-trans-beta-carotene + 2 AH2 + 2 O2 = echinenone + 2 A + 3 H2O. The protein operates within carotenoid biosynthesis. Its function is as follows. Involved in the biosynthesis of ketocarotenoids which are powerful anti-oxidative molecules. Catalyzes the conversion of beta-carotene to canthaxanthin via echinenone. This Protosiphon botryoides (Green alga) protein is Beta-carotene 4-ketolase.